Consider the following 270-residue polypeptide: Large ribosomal subunit protein uL2c (270 aa).

The interval 221 to 245 is disordered; the sequence is NPIDHPHGGGEGRAPIGRNQPKTPW.

It belongs to the universal ribosomal protein uL2 family. Part of the 50S ribosomal subunit.

It localises to the plastid. The polypeptide is Large ribosomal subunit protein uL2c (rpl2) (Cuscuta gronovii (Common dodder)).